We begin with the raw amino-acid sequence, 458 residues long: Elongation factor 1-alpha 1 (458 aa).

The residue at position 2 (G2) is a N,N,N-trimethylglycine. K3 bears the N6,N6-dimethyllysine; alternate mark. The residue at position 3 (K3) is an N6-methyllysine; alternate. A tr-type G domain is found at 5 to 240 (KTHVNVVVIG…DAIEPPTRPT (236 aa)). The G1 stretch occupies residues 14-21 (GHVDSGKS). GTP is bound at residue 14 to 21 (GHVDSGKS). K30 is modified (N6-methyllysine). Residues 70-74 (GITID) form a G2 region. K79 carries the N6,N6,N6-trimethyllysine modification. The tract at residues 91 to 94 (DAPG) is G3. GTP contacts are provided by residues 91–95 (DAPGH) and 153–156 (NKMD). The interval 153 to 156 (NKMD) is G4. The segment at 192–194 (SGW) is G5. K316 carries the post-translational modification N6,N6-dimethyllysine; alternate. Position 316 is an N6-methyllysine; alternate (K316). Position 390 is an N6-methyllysine (K390).

This sequence belongs to the TRAFAC class translation factor GTPase superfamily. Classic translation factor GTPase family. EF-Tu/EF-1A subfamily.

It is found in the cytoplasm. Functionally, this protein promotes the GTP-dependent binding of aminoacyl-tRNA to the A-site of ribosomes during protein biosynthesis. This Candida albicans (strain SC5314 / ATCC MYA-2876) (Yeast) protein is Elongation factor 1-alpha 1 (TEF1).